The primary structure comprises 462 residues: Glycerol-3-phosphate dehydrogenase [NAD(+)] GPDHC1, cytosolic (462 aa).

Residues 48-53, K196, and A235 contribute to the NAD(+) site; that span reads GAGAWG. Position 196 (K196) interacts with substrate. K285 serves as the catalytic Proton acceptor. The NAD(+) site is built by R347 and Q375. 347–348 serves as a coordination point for substrate; sequence RN.

The protein belongs to the NAD-dependent glycerol-3-phosphate dehydrogenase family. In terms of tissue distribution, expressed in roots, leaves, flowers and siliques.

It is found in the cytoplasm. The protein resides in the cytosol. It catalyses the reaction sn-glycerol 3-phosphate + NAD(+) = dihydroxyacetone phosphate + NADH + H(+). Involved in cell redox homeostasis. Required for maintaining a steady state cellular NADH/NAD(+) ratio through a mitochondrial glycerol-3-phosphate redox shuttle. May function with the mitochondrial FAD-dependent glycerol-3-phosphate dehydrogenase SDP6 to shuttle reducing equivalents into the mitochondria for respiration. The protein is Glycerol-3-phosphate dehydrogenase [NAD(+)] GPDHC1, cytosolic (GPDHC1) of Arabidopsis thaliana (Mouse-ear cress).